The chain runs to 121 residues: Basic phospholipase A2 CoaTx-II (121 aa).

Disulfide bonds link cysteine 26/cysteine 115, cysteine 28/cysteine 44, cysteine 43/cysteine 95, cysteine 49/cysteine 121, cysteine 50/cysteine 88, cysteine 57/cysteine 81, and cysteine 75/cysteine 86. The interval 105-117 (KKYRIYPKFLCKK) is important for membrane-damaging activities in eukaryotes and bacteria; heparin-binding.

This sequence belongs to the phospholipase A2 family. Group II subfamily. K49 sub-subfamily. As to quaternary structure, homodimer; non-covalently-linked. As to expression, expressed by the venom gland.

Its subcellular location is the secreted. In terms of biological role, snake venom phospholipase A2 (PLA2) that lacks enzymatic inactivity. It shows antibacterial activity against both Gram-negative and Gram-positive bacteria, including methicillin-resistant strains. In vivo, it causes local muscular damage, but no systemic damage (intravenous administration does not elevate plasma creatine kinase). Also causes an inflammatory activity that is demonstrated by mice paw edema induction and pro-inflammatory cytokine IL-6 elevation. A model of myotoxic mechanism has been proposed: an apo Lys49-PLA2 is activated by the entrance of a hydrophobic molecule (e.g. fatty acid) at the hydrophobic channel of the protein leading to a reorientation of a monomer. This reorientation causes a transition between 'inactive' to 'active' states, causing alignment of C-terminal and membrane-docking sites (MDoS) side-by-side and putting the membrane-disruption sites (MDiS) in the same plane, exposed to solvent and in a symmetric position for both monomers. The MDoS region stabilizes the toxin on membrane by the interaction of charged residues with phospholipid head groups. Subsequently, the MDiS region destabilizes the membrane with penetration of hydrophobic residues. This insertion causes a disorganization of the membrane, allowing an uncontrolled influx of ions (i.e. calcium and sodium), and eventually triggering irreversible intracellular alterations and cell death. This chain is Basic phospholipase A2 CoaTx-II, found in Crotalus lutosus abyssus (Grand Canyon rattlesnake).